The primary structure comprises 247 residues: Large ribosomal subunit protein uL30z (247 aa).

Belongs to the universal ribosomal protein uL30 family.

The protein is Large ribosomal subunit protein uL30z (RPL7A) of Arabidopsis thaliana (Mouse-ear cress).